Consider the following 625-residue polypeptide: Tumor necrosis factor receptor superfamily member 11A (625 aa).

An N-terminal signal peptide occupies residues 1 to 30 (MAPRARRRRQLPAPLLALCVLLVPLQVTLQ). Residues 31–214 (VTPPCTQERH…PKEAQAYLPS (184 aa)) lie on the Extracellular side of the membrane. Intrachain disulfides connect Cys-35-Cys-47, Cys-48-Cys-61, Cys-51-Cys-69, Cys-72-Cys-87, Cys-93-Cys-113, Cys-115-Cys-128, Cys-125-Cys-127, Cys-134-Cys-152, and Cys-155-Cys-170. TNFR-Cys repeat units lie at residues 35-69 (CTQERHYEHLGRCCSRCEPGKYLSSKCTPTSDSVC), 72-113 (CGPD…PRRC), 115-152 (CTAGYHWNSDCECCRRNTECAPGFGAQHPLQLNKDTVC), and 155-195 (CLLG…DVVC). A glycan (N-linked (GlcNAc...) asparagine) is linked at Asn-106. Na(+) contacts are provided by Cys-134, Ala-135, Phe-138, Ser-161, and Val-163. A glycan (N-linked (GlcNAc...) asparagine) is linked at Asn-175. Residues Cys-176 and Cys-195 are joined by a disulfide bond. A helical membrane pass occupies residues 215–234 (LIVLLLFISVVVVAAIIFGV). Residues 235 to 625 (YYRKGGKALT…HTQGSGQCAE (391 aa)) are Cytoplasmic-facing. Disordered regions lie at residues 331–356 (TQGDLSRKIPTEDEYTDRPSQPSTGS), 388–413 (GTESTVDSEGCDFTEPPSRTDSMPVS), and 479–524 (SMAE…FISS). The segment covering 499 to 511 (SGSSPSDQPPASG) has biased composition (low complexity). The span at 512–524 (NVTGNSNSTFISS) shows a compositional bias: polar residues. The required for interaction with EEIG1 and osteoclast differentiation stretch occupies residues 532 to 537 (GDIIVV). The segment at 542-625 (TSQEGPGSAE…HTQGSGQCAE (84 aa)) is disordered. Residues 543 to 558 (SQEGPGSAEPESEPVG) show a composition bias toward low complexity. Positions 561–571 (VQEETLAHRDS) are enriched in basic and acidic residues. Ser-571 is subject to Phosphoserine. Over residues 603-625 (RPVQEQGGAQTSLHTQGSGQCAE) the composition is skewed to polar residues.

As to quaternary structure, binds to the clefts between the subunits of the TNFSF11 ligand trimer to form a heterohexamer. Part of a complex composed of EEIG1, TNFRSF11A/RANK, PLCG2, GAB2, TEC and BTK; complex formation increases in the presence of TNFSF11/RANKL. Interacts with TRAF1, TRAF2, TRAF3, TRAF5 and TRAF6. Interacts (via cytoplasmic domain) with GAB2. Interacts (via cytoplasmic domain); with EEIG1 (via N-terminus); when in the presence of TNFSF11/RANKL. In terms of tissue distribution, ubiquitous expression with high levels in trabecular bone, thymus, small intestine, lung, brain and kidney. Weakly expressed in spleen and bone marrow.

The protein localises to the cell membrane. The protein resides in the membrane raft. In terms of biological role, receptor for TNFSF11/RANKL/TRANCE/OPGL; essential for RANKL-mediated osteoclastogenesis. Its interaction with EEIG1 promotes osteoclastogenesis via facilitating the transcription of NFATC1 and activation of PLCG2. Involved in the regulation of interactions between T-cells and dendritic cells. The protein is Tumor necrosis factor receptor superfamily member 11A (Tnfrsf11a) of Mus musculus (Mouse).